Consider the following 488-residue polypeptide: Proline--tRNA ligase (488 aa).

Belongs to the class-II aminoacyl-tRNA synthetase family. ProS type 3 subfamily. In terms of assembly, homodimer.

It localises to the cytoplasm. It carries out the reaction tRNA(Pro) + L-proline + ATP = L-prolyl-tRNA(Pro) + AMP + diphosphate. Catalyzes the attachment of proline to tRNA(Pro) in a two-step reaction: proline is first activated by ATP to form Pro-AMP and then transferred to the acceptor end of tRNA(Pro). The protein is Proline--tRNA ligase of Pyrobaculum islandicum (strain DSM 4184 / JCM 9189 / GEO3).